We begin with the raw amino-acid sequence, 520 residues long: MSNKCDVIVVGGGISGMAAAKLLHDCGLSVVVLEARDRVGGRTYTIRNKNVKYVDLGGSYVGPTQNRILRLAKELGLETYKVNEVERLIHFVKGKSYAFRGPFPPVWNPITYLDYNNLWRTMDEMGQEIPSDAPWKAPLAEEWDYMTMKELLDKICWTNSTKQIATLFVNLCVTAETHEVSALWFLWYVKQCGGTTRIISTTNGGQERKFIGGSGQVSERIKDILGDRVKLERPVIHIDQTGENVVVKTLNHEIYEAKYVISAIPPVLGMKIHHSPPLPILRNQLITRVPLGSVIKCMVYYKEPFWRKKDFCGTMVIEGEEAPIAYTLDDTKPDGSCAAIMGFILAHKARKLVRLTKEERLRKLCELYAKVLNSQEALQPVHYEEKNWCEEQYSGGCYTAYFPPGILTQYGRVLRQPVGKIFFAGTETASHWSGYMEGAVEAGERAAREILHAIGKIPEDEIWQPEPESVDVPARPITNTFLERHLPSVPGLLKLLGLTTILSATALGFLAHKKGLFVRF.

The residue at position 2 (Ser2) is an N-acetylserine. At 2–489 (SNKCDVIVVG…TFLERHLPSV (488 aa)) the chain is on the cytoplasmic side. Lys52 bears the N6-acetyllysine mark. Cys397 carries the post-translational modification S-8alpha-FAD cysteine. A helical; Anchor for type IV membrane protein transmembrane segment spans residues 490 to 516 (PGLLKLLGLTTILSATALGFLAHKKGL). The Mitochondrial intermembrane segment spans residues 517–520 (FVRF).

It belongs to the flavin monoamine oxidase family. Monomer, homo- or heterodimer (containing two subunits of similar size). Each subunit contains a covalently bound flavin. Enzymatically active as monomer. It depends on FAD as a cofactor.

It is found in the mitochondrion outer membrane. It catalyses the reaction a secondary aliphatic amine + O2 + H2O = a primary amine + an aldehyde + H2O2. It carries out the reaction (R)-adrenaline + O2 + H2O = (R)-3,4-dihydroxymandelaldehyde + methylamine + H2O2. The enzyme catalyses a primary methyl amine + O2 + H2O = an aldehyde + H2O2 + NH4(+). The catalysed reaction is dopamine + O2 + H2O = 3,4-dihydroxyphenylacetaldehyde + H2O2 + NH4(+). It catalyses the reaction tyramine + O2 + H2O = (4-hydroxyphenyl)acetaldehyde + H2O2 + NH4(+). It carries out the reaction (R)-noradrenaline + O2 + H2O = (R)-3,4-dihydroxymandelaldehyde + H2O2 + NH4(+). The enzyme catalyses benzylamine + O2 + H2O = benzaldehyde + H2O2 + NH4(+). The catalysed reaction is 2-phenylethylamine + O2 + H2O = 2-phenylacetaldehyde + H2O2 + NH4(+). It catalyses the reaction N-acetylputrescine + O2 + H2O = 4-acetamidobutanal + H2O2 + NH4(+). Catalyzes the oxidative deamination of primary and some secondary amines such as neurotransmitters, and exogenous amines including the tertiary amine, neurotoxin 1-methyl-4-phenyl-1,2,3,6-tetrahydropyridine (MPTP), with concomitant reduction of oxygen to hydrogen peroxide and participates in the metabolism of neuroactive and vasoactive amines in the central nervous system and peripheral tissues. Preferentially degrades benzylamine and phenylethylamine. This Rattus norvegicus (Rat) protein is Amine oxidase [flavin-containing] B.